A 1211-amino-acid polypeptide reads, in one-letter code: DNA-directed RNA polymerase subunit beta' (1211 aa).

Positions 60, 62, 75, and 78 each coordinate Zn(2+). 3 residues coordinate Mg(2+): D450, D452, and D454. Zn(2+) contacts are provided by C819, C893, C900, and C903.

The protein belongs to the RNA polymerase beta' chain family. In terms of assembly, the RNAP catalytic core consists of 2 alpha, 1 beta, 1 beta' and 1 omega subunit. When a sigma factor is associated with the core the holoenzyme is formed, which can initiate transcription. It depends on Mg(2+) as a cofactor. Requires Zn(2+) as cofactor.

The catalysed reaction is RNA(n) + a ribonucleoside 5'-triphosphate = RNA(n+1) + diphosphate. Functionally, DNA-dependent RNA polymerase catalyzes the transcription of DNA into RNA using the four ribonucleoside triphosphates as substrates. This chain is DNA-directed RNA polymerase subunit beta', found in Streptococcus equi subsp. zooepidemicus (strain H70).